The primary structure comprises 101 residues: NAD(P)H-quinone oxidoreductase subunit 4L, chloroplastic (101 aa).

3 helical membrane-spanning segments follow: residues 2 to 22 (MLEY…YGLI), 32 to 52 (MCLE…SDFF), and 61 to 81 (IFSI…PAIV).

This sequence belongs to the complex I subunit 4L family. In terms of assembly, NDH is composed of at least 16 different subunits, 5 of which are encoded in the nucleus.

The protein resides in the plastid. The protein localises to the chloroplast thylakoid membrane. It carries out the reaction a plastoquinone + NADH + (n+1) H(+)(in) = a plastoquinol + NAD(+) + n H(+)(out). It catalyses the reaction a plastoquinone + NADPH + (n+1) H(+)(in) = a plastoquinol + NADP(+) + n H(+)(out). Functionally, NDH shuttles electrons from NAD(P)H:plastoquinone, via FMN and iron-sulfur (Fe-S) centers, to quinones in the photosynthetic chain and possibly in a chloroplast respiratory chain. The immediate electron acceptor for the enzyme in this species is believed to be plastoquinone. Couples the redox reaction to proton translocation, and thus conserves the redox energy in a proton gradient. The polypeptide is NAD(P)H-quinone oxidoreductase subunit 4L, chloroplastic (Populus trichocarpa (Western balsam poplar)).